Here is a 176-residue protein sequence, read N- to C-terminus: MRERQNSYEYEDLLACGRGELFGPGNAQLPLPPMLMFDRIVEITETGGEFGKGVIRAELDVKPDLWFFGCHFKGDPVMPGCLGLDALWQMVGFFLGWTGGSGRGRALGLGDLKFSGQVLPHVMRVQYHIDMKRIMRSRLVLGVADGWLSTDGEIIYRATDLKVGLFQQDAAAQAGK.

The active site involves H71.

It belongs to the thioester dehydratase family. FabA subfamily. In terms of assembly, homodimer.

The protein resides in the cytoplasm. It carries out the reaction a (3R)-hydroxyacyl-[ACP] = a (2E)-enoyl-[ACP] + H2O. The enzyme catalyses (3R)-hydroxydecanoyl-[ACP] = (2E)-decenoyl-[ACP] + H2O. It catalyses the reaction (2E)-decenoyl-[ACP] = (3Z)-decenoyl-[ACP]. Its pathway is lipid metabolism; fatty acid biosynthesis. Necessary for the introduction of cis unsaturation into fatty acids. Catalyzes the dehydration of (3R)-3-hydroxydecanoyl-ACP to E-(2)-decenoyl-ACP and then its isomerization to Z-(3)-decenoyl-ACP. Can catalyze the dehydratase reaction for beta-hydroxyacyl-ACPs with saturated chain lengths up to 16:0, being most active on intermediate chain length. The protein is 3-hydroxydecanoyl-[acyl-carrier-protein] dehydratase of Afipia carboxidovorans (strain ATCC 49405 / DSM 1227 / KCTC 32145 / OM5) (Oligotropha carboxidovorans).